The following is a 677-amino-acid chain: UvrABC system protein B (677 aa).

A Helicase ATP-binding domain is found at 25–412 (QGVNGGERYQ…GGEVAQQVIR (388 aa)). An ATP-binding site is contributed by 38 to 45 (GATGTGKT). The Beta-hairpin signature appears at 91–114 (YYDYYQPEAYVPVSDTYIAKTASI). Residues 429–591 (QVDDLLGEIR…IVPTAAGKKA (163 aa)) enclose the Helicase C-terminal domain. Residues 639-674 (PELIDQLEGKMKEAAKKLDFEDAANLRDRIKQLRQK) enclose the UVR domain.

This sequence belongs to the UvrB family. In terms of assembly, forms a heterotetramer with UvrA during the search for lesions. Interacts with UvrC in an incision complex.

Its subcellular location is the cytoplasm. Functionally, the UvrABC repair system catalyzes the recognition and processing of DNA lesions. A damage recognition complex composed of 2 UvrA and 2 UvrB subunits scans DNA for abnormalities. Upon binding of the UvrA(2)B(2) complex to a putative damaged site, the DNA wraps around one UvrB monomer. DNA wrap is dependent on ATP binding by UvrB and probably causes local melting of the DNA helix, facilitating insertion of UvrB beta-hairpin between the DNA strands. Then UvrB probes one DNA strand for the presence of a lesion. If a lesion is found the UvrA subunits dissociate and the UvrB-DNA preincision complex is formed. This complex is subsequently bound by UvrC and the second UvrB is released. If no lesion is found, the DNA wraps around the other UvrB subunit that will check the other stand for damage. The chain is UvrABC system protein B from Parasynechococcus marenigrum (strain WH8102).